The chain runs to 141 residues: Hemoglobin subunit alpha (141 aa).

The Globin domain occupies 1-141 (VLSATDKANV…VATVLTSKYR (141 aa)). At S3 the chain carries Phosphoserine. Residues K7 and K11 each carry the N6-succinyllysine modification. K16 carries the post-translational modification N6-acetyllysine; alternate. At K16 the chain carries N6-succinyllysine; alternate. Y24 carries the phosphotyrosine modification. An N6-succinyllysine modification is found at K40. Residue H58 participates in O2 binding. H87 lines the heme b pocket. Position 102 is a phosphoserine (S102). T108 carries the phosphothreonine modification. S124 is subject to Phosphoserine. T134 and T137 each carry phosphothreonine. The residue at position 138 (S138) is a Phosphoserine.

The protein belongs to the globin family. As to quaternary structure, heterotetramer of two alpha chains and two beta chains. Red blood cells.

In terms of biological role, involved in oxygen transport from the lung to the various peripheral tissues. Its function is as follows. Hemopressin acts as an antagonist peptide of the cannabinoid receptor CNR1. Hemopressin-binding efficiently blocks cannabinoid receptor CNR1 and subsequent signaling. In Erinaceus europaeus (Western European hedgehog), this protein is Hemoglobin subunit alpha (HBA).